The following is a 246-amino-acid chain: 3-deoxy-manno-octulosonate cytidylyltransferase (246 aa).

It belongs to the KdsB family.

It is found in the cytoplasm. It catalyses the reaction 3-deoxy-alpha-D-manno-oct-2-ulosonate + CTP = CMP-3-deoxy-beta-D-manno-octulosonate + diphosphate. The protein operates within nucleotide-sugar biosynthesis; CMP-3-deoxy-D-manno-octulosonate biosynthesis; CMP-3-deoxy-D-manno-octulosonate from 3-deoxy-D-manno-octulosonate and CTP: step 1/1. It participates in bacterial outer membrane biogenesis; lipopolysaccharide biosynthesis. Functionally, activates KDO (a required 8-carbon sugar) for incorporation into bacterial lipopolysaccharide in Gram-negative bacteria. The chain is 3-deoxy-manno-octulosonate cytidylyltransferase from Rickettsia conorii (strain ATCC VR-613 / Malish 7).